The chain runs to 375 residues: Homoserine O-succinyltransferase (375 aa).

Residues 48 to 358 form the AB hydrolase-1 domain; the sequence is NAVLVCHALS…DAGHDSFLLD (311 aa). The Nucleophile role is filled by Ser154. Residue Arg224 coordinates substrate. Catalysis depends on residues Asp319 and His352. Asp353 provides a ligand contact to substrate.

The protein belongs to the AB hydrolase superfamily. MetX family. Homodimer.

It is found in the cytoplasm. The catalysed reaction is L-homoserine + succinyl-CoA = O-succinyl-L-homoserine + CoA. It participates in amino-acid biosynthesis; L-methionine biosynthesis via de novo pathway; O-succinyl-L-homoserine from L-homoserine: step 1/1. Functionally, transfers a succinyl group from succinyl-CoA to L-homoserine, forming succinyl-L-homoserine. The protein is Homoserine O-succinyltransferase of Aromatoleum aromaticum (strain DSM 19018 / LMG 30748 / EbN1) (Azoarcus sp. (strain EbN1)).